Reading from the N-terminus, the 295-residue chain is Ribosomal RNA small subunit methyltransferase A (295 aa).

S-adenosyl-L-methionine-binding residues include Asn33, Val35, Gly60, Glu81, Asp111, and Asn129.

It belongs to the class I-like SAM-binding methyltransferase superfamily. rRNA adenine N(6)-methyltransferase family. RsmA subfamily.

Its subcellular location is the cytoplasm. The enzyme catalyses adenosine(1518)/adenosine(1519) in 16S rRNA + 4 S-adenosyl-L-methionine = N(6)-dimethyladenosine(1518)/N(6)-dimethyladenosine(1519) in 16S rRNA + 4 S-adenosyl-L-homocysteine + 4 H(+). In terms of biological role, specifically dimethylates two adjacent adenosines (A1518 and A1519) in the loop of a conserved hairpin near the 3'-end of 16S rRNA in the 30S particle. May play a critical role in biogenesis of 30S subunits. The chain is Ribosomal RNA small subunit methyltransferase A from Corynebacterium diphtheriae (strain ATCC 700971 / NCTC 13129 / Biotype gravis).